The chain runs to 613 residues: DBH-like monooxygenase protein 1 (613 aa).

The N-terminal stretch at 1 to 19 is a signal peptide; sequence MCGWPLLVLWALLPATAAG. At 20–587 the chain is on the lumenal side; sequence SPGRSYPHRV…PLVCEKAASP (568 aa). The 114-residue stretch at 35 to 148 folds into the DOMON domain; it reads GKYWLHWGRQ…STVRVIWAYH (114 aa). N114 carries N-linked (GlcNAc...) asparagine glycosylation. The active site involves Y203. 2 cysteine pairs are disulfide-bonded: C205–C257 and C242–C269. Cu cation contacts are provided by H235 and H236. N-linked (GlcNAc...) asparagine glycosylation is present at N247. Cu cation is bound by residues H307, H389, H391, and M464. Intrachain disulfides connect C364-C480, C368-C550, and C443-C465. H389 is an active-site residue. N476 and N517 each carry an N-linked (GlcNAc...) asparagine glycan. The helical transmembrane segment at 588–608 threads the bilayer; it reads PLHGIFSLRLLTCALLLGSML.

This sequence belongs to the copper type II ascorbate-dependent monooxygenase family. Cu(2+) serves as cofactor. In terms of processing, N-glycosylated. As to expression, broadly exprressed, with highest levels in salivary gland and ovary.

It is found in the endoplasmic reticulum membrane. This is DBH-like monooxygenase protein 1 (Moxd1) from Mus musculus (Mouse).